The sequence spans 188 residues: mRNA transport factor GFD1 (188 aa).

The interval 1–128 (MPLESIWADA…KTQSKQDTAS (128 aa)) is disordered. A compositionally biased stretch (basic residues) spans 18-28 (KQKPSHKRSNN). The segment covering 29–44 (NKKNNNSRWSNESSSN) has biased composition (low complexity). Over residues 59-79 (GNHESKTKNKIKETLPREKKP) the composition is skewed to basic and acidic residues. 3 positions are modified to phosphoserine: Ser87, Ser106, and Ser111. Low complexity predominate over residues 112–128 (PSKMKTTKTQSKQDTAS). Residues 119 to 164 (KTQSKQDTASKMKLLKKKIEEQREILQKTHHKNQQQQVLMDFLNDE) are a coiled coil.

In terms of assembly, interacts with GLE1, NUP42, NAB2, ZDS1 and probably DBP5. Forms a complex with GLE1 and NAB2.

The protein localises to the cytoplasm. It localises to the nucleus. It is found in the nuclear pore complex. Its subcellular location is the nucleus membrane. Functionally, high-copy suppressor of mutant alleles of ATP-dependent RNA helicase DBP5, which is involved in mRNA export from the nucleus. It may also play an important role in a late stage of NAB2-mRNA export. This chain is mRNA transport factor GFD1 (GFD1), found in Saccharomyces cerevisiae (strain ATCC 204508 / S288c) (Baker's yeast).